Reading from the N-terminus, the 435-residue chain is Keratin, type I cytoskeletal 18 (435 aa).

The span at 1 to 28 (MSLRSSYSVRSSTSQVPVSQMSQMSQMS) shows a compositional bias: low complexity. The tract at residues 1 to 36 (MSLRSSYSVRSSTSQVPVSQMSQMSQMSIKRTTNVP) is disordered. The interval 2 to 88 (SLRSSYSVRS…TGATGDIMGN (87 aa)) is head. The coil 1A stretch occupies residues 89–123 (EKMAMQNLNDRLASYLRSETLEQANSKLELKIREA). An IF rod domain is found at 89-399 (EKMAMQNLND…RLLDGGDFKL (311 aa)). A linker 1 region spans residues 124–140 (LEKKGPEVCDYSRFQPI). The coil 1B stretch occupies residues 141–232 (IDDLRRKIFD…KNHDNEVMEL (92 aa)). A linker 12 region spans residues 233-256 (RNQISHSGVQVDVDAPKGQDLAKI). The tract at residues 257–394 (MEEIRSKYEK…IATYRRLLDG (138 aa)) is coil 2. Residues 395 to 435 (GDFKLQDALEEQKRVKVMTVTQTLVDGKVVSSSTETKEKKF) are tail.

It belongs to the intermediate filament family. In terms of assembly, heterotetramer of two type I and two type II keratins. Keratin-18 associates with keratin-8. Phosphorylated. In terms of processing, proteolytically cleaved by caspases during epithelial cell apoptosis. Abundantly expressed in an even distribution throughout the optic nerve, localizing specifically to the astrocyte domains. Moderately expressed in spinal cord, brain, liver and oocytes.

When phosphorylated, plays a role in filament reorganization. This is Keratin, type I cytoskeletal 18 (krt18) from Carassius auratus (Goldfish).